A 182-amino-acid polypeptide reads, in one-letter code: Keratin, type II cytoskeletal 68 kDa, component IA (182 aa).

Residues 1-66 (DAEQHGEVAL…TLLEGEECRM (66 aa)) enclose the IF rod domain. Positions 1–66 (DAEQHGEVAL…TLLEGEECRM (66 aa)) are coil 2B. The tract at residues 67 to 86 (SGECQSSVSIEMVHNTTSSS) is H2 subdomain. Residues 67 to 182 (SGECQSSVSI…SQSQRSHHKL (116 aa)) are tail. A V2 subdomain region spans residues 87-162 (SGGSGALGGG…GSCAVSGVGG (76 aa)). The segment covering 104–124 (GSGGLGSGSLGSGRLGSGGRG) has biased composition (gly residues). The tract at residues 104-182 (GSGGLGSGSL…SQSQRSHHKL (79 aa)) is disordered. 2 stretches are compositionally biased toward low complexity: residues 144-158 (VRGS…CAVS) and 165-176 (SVRVTQSSSQSQ). An E2 subdomain region spans residues 163 to 182 (RGSVRVTQSSSQSQRSHHKL).

Belongs to the intermediate filament family. As to quaternary structure, heterotetramer of two type I and two type II keratins.

The protein is Keratin, type II cytoskeletal 68 kDa, component IA of Bos taurus (Bovine).